We begin with the raw amino-acid sequence, 221 residues long: Probable chemoreceptor glutamine deamidase CheD 1 (221 aa).

Belongs to the CheD family.

It catalyses the reaction L-glutaminyl-[protein] + H2O = L-glutamyl-[protein] + NH4(+). Its function is as follows. Probably deamidates glutamine residues to glutamate on methyl-accepting chemotaxis receptors (MCPs), playing an important role in chemotaxis. The polypeptide is Probable chemoreceptor glutamine deamidase CheD 1 (Methanosarcina mazei (strain ATCC BAA-159 / DSM 3647 / Goe1 / Go1 / JCM 11833 / OCM 88) (Methanosarcina frisia)).